Here is a 263-residue protein sequence, read N- to C-terminus: N-glycosylase/DNA lyase (263 aa).

8-oxoguanine contacts are provided by Q43, S71, and W82. Residues 139-204 (RRYYFENMMG…EDVRIKAYTE (66 aa)) are helix-hairpin-helix. K164 functions as the Schiff-base intermediate with DNA in the catalytic mechanism. Positions 168 and 194 each coordinate 8-oxoguanine. The active site involves D196. Positions 230 and 234 each coordinate 8-oxoguanine.

The protein belongs to the archaeal N-glycosylase/DNA lyase (AGOG) family.

The enzyme catalyses 2'-deoxyribonucleotide-(2'-deoxyribose 5'-phosphate)-2'-deoxyribonucleotide-DNA = a 3'-end 2'-deoxyribonucleotide-(2,3-dehydro-2,3-deoxyribose 5'-phosphate)-DNA + a 5'-end 5'-phospho-2'-deoxyribonucleoside-DNA + H(+). Its function is as follows. DNA repair enzyme that is part of the base excision repair (BER) pathway; protects from oxidative damage by removing the major product of DNA oxidation, 8-oxoguanine (GO), from single- and double-stranded DNA substrates. This Thermococcus kodakarensis (strain ATCC BAA-918 / JCM 12380 / KOD1) (Pyrococcus kodakaraensis (strain KOD1)) protein is N-glycosylase/DNA lyase.